The primary structure comprises 200 residues: Ubiquinol-cytochrome-c reductase complex assembly factor 1 (200 aa).

Belongs to the CBP3 family.

The protein resides in the mitochondrion inner membrane. In terms of biological role, required for the assembly of the ubiquinol-cytochrome c reductase complex (mitochondrial respiratory chain complex III or cytochrome b-c1 complex). May be involved in cytochrome b translation and/or stability. The chain is Ubiquinol-cytochrome-c reductase complex assembly factor 1 (uqcc1) from Xenopus laevis (African clawed frog).